The primary structure comprises 396 residues: MAKAKFERNKPHVNVGTIGHVDHGKTTLTAAIATICAKTYGGEAKDYSQIDSAPEEKARGITINTSHVEYDSPTRHYAHVDCPGHADYVKNMITGAAQMDGAILVCAATDGPMPQTREHILLSRQVGVPYIIVFLNKCDLVDDEELLELVEMEVRELLSTYDFPGDDTPVIRGSALAALNGEAGPYGEESVLALVAALDSYIPEPERAIDKAFLMPIEDVFSISGRGTVVTGRVEAGIIKVGEEVEIVGIKDTVKTTVTGVEMFRKLLDEGRAGENCGILLRGTKREEVQRGQVLAKPGTIKPHTKFDAEVYVLSKEEGGRHTPFLNGYRPQFYFRTTDVTGAIQLKEGVEMVMPGDNVEMSVELIHPIAMDPGLRFAIREGGRTVGAGVVAKVTA.

One can recognise a tr-type G domain in the interval 10–206 (KPHVNVGTIG…ALDSYIPEPE (197 aa)). The tract at residues 19-26 (GHVDHGKT) is G1. GTP is bound at residue 19–26 (GHVDHGKT). Thr26 is a Mg(2+) binding site. The segment at 60-64 (GITIN) is G2. Positions 81-84 (DCPG) are G3. GTP is bound by residues 81-85 (DCPGH) and 136-139 (NKCD). Residues 136–139 (NKCD) are G4. Residues 174–176 (SAL) are G5.

It belongs to the TRAFAC class translation factor GTPase superfamily. Classic translation factor GTPase family. EF-Tu/EF-1A subfamily. Monomer.

Its subcellular location is the cytoplasm. The enzyme catalyses GTP + H2O = GDP + phosphate + H(+). GTP hydrolase that promotes the GTP-dependent binding of aminoacyl-tRNA to the A-site of ribosomes during protein biosynthesis. This chain is Elongation factor Tu, found in Acinetobacter baumannii (strain ATCC 17978 / DSM 105126 / CIP 53.77 / LMG 1025 / NCDC KC755 / 5377).